Here is a 443-residue protein sequence, read N- to C-terminus: Phosphoglucosamine mutase (443 aa).

Ser101 acts as the Phosphoserine intermediate in catalysis. Mg(2+) is bound by residues Ser101, Asp240, Asp242, and Asp244. Ser101 carries the post-translational modification Phosphoserine.

Belongs to the phosphohexose mutase family. Mg(2+) is required as a cofactor. Post-translationally, activated by phosphorylation.

The enzyme catalyses alpha-D-glucosamine 1-phosphate = D-glucosamine 6-phosphate. In terms of biological role, catalyzes the conversion of glucosamine-6-phosphate to glucosamine-1-phosphate. The chain is Phosphoglucosamine mutase from Psychromonas ingrahamii (strain DSM 17664 / CCUG 51855 / 37).